The sequence spans 570 residues: Proline--tRNA ligase (570 aa).

Belongs to the class-II aminoacyl-tRNA synthetase family. ProS type 1 subfamily. Homodimer.

It localises to the cytoplasm. The catalysed reaction is tRNA(Pro) + L-proline + ATP = L-prolyl-tRNA(Pro) + AMP + diphosphate. Catalyzes the attachment of proline to tRNA(Pro) in a two-step reaction: proline is first activated by ATP to form Pro-AMP and then transferred to the acceptor end of tRNA(Pro). As ProRS can inadvertently accommodate and process non-cognate amino acids such as alanine and cysteine, to avoid such errors it has two additional distinct editing activities against alanine. One activity is designated as 'pretransfer' editing and involves the tRNA(Pro)-independent hydrolysis of activated Ala-AMP. The other activity is designated 'posttransfer' editing and involves deacylation of mischarged Ala-tRNA(Pro). The misacylated Cys-tRNA(Pro) is not edited by ProRS. The chain is Proline--tRNA ligase from Thermoanaerobacter pseudethanolicus (strain ATCC 33223 / 39E) (Clostridium thermohydrosulfuricum).